The primary structure comprises 518 residues: MFS-type transporter cnsO (518 aa).

Over residues 1-13 (MESTDSSPPLSMT) the composition is skewed to polar residues. The disordered stretch occupies residues 1 to 24 (MESTDSSPPLSMTDTEKKGDAVTT). 9 helical membrane-spanning segments follow: residues 99-119 (LALMYFFFTYGLSEPVSNIML), 122-142 (VGPKIWFPFIVCAWGLITTLT), 156-176 (LMLGITEAGLYPGAYFILSMW), 187-207 (AIFYGANTTAGAFGGVIAYGV), 221-241 (WLFLIEGCITIFAGLACLFCL), 298-318 (FMMMLFWWGGSVPTYSLSYTL), 334-354 (VMTTPPYIFATCVCVAVGYIS), 362-382 (LCIMGAYTLGLIGIIILWITV), and 392-412 (YFAIFLAAAGYSAQAPIVGAW). Residue asparagine 416 is glycosylated (N-linked (GlcNAc...) asparagine). 2 helical membrane-spanning segments follow: residues 427 to 447 (IGLLMLLGSVGGGSIGSNIYI) and 455 to 475 (PLGFGFSVGATVLGAMIPATI).

The protein belongs to the major facilitator superfamily.

It is found in the cell membrane. In terms of biological role, MFS-type transporter; part of the gene cluster that mediates the biosynthesis of communesins, a prominent class of indole alkaloids with great potential as pharmaceuticals. With the MFS transporter cnsL, is most likely responsible for cummunesins secretion and thereby may contribute to intrinsic resistance. This is MFS-type transporter cnsO from Penicillium expansum (Blue mold rot fungus).